A 680-amino-acid polypeptide reads, in one-letter code: MLCLGLSGGLSKIHENSLDLPNTFMHDGAAVLVRDGQVIAAVEEERLNRIKHSNKLPRRSIQYCLEYAGVQLSDIDCIAYYATEAFCNAMLERLLVSQSHMSIPLDAKLLLRGLLAQEFGTEVDPSRISFVSHHLSHAWSAFSMSGFEQSLILTIDGGGDFASGLLAVGSGTEVKPLATFPESDSLGLLYLETIKYLGYGMFDEYKVMGLAPYGDPAPHRDLFEQFYELLDNGGYRIYLDRIGPTLLRSIEVRRKGMPFTQQHKDLSASLQEALERIVFHVLRHHSEITGIKRLSLAGGVAHNCTLNGKLLRSGIFQDIFVQPAAHDAGCALGAALMMSNELGQSAPRERLQEVYWGPDLGSDRAVEQELIAWGGHIEIERCDDVASRAAEWIADGAVIGWVQGRSEFGPRALGNRSILADPRPATNKDRINAIVKKREGYRPFAPSVLEEDANEFFELPDSRQEFPFMNFVVPVRESKRNLLGAVTHVDGTARLQTVSRNINQAYWEVINAFRKRTGVPILLNTSFNNNVEPIVDSVADAVTTFLTTDLDGLVVGSYLIKKRTASPEDWSRLALSLPPYSSLHQVRAFTALDRQETVCEIRTGPSSREAVRISSELFELLMRIDGEAPLGDILDLIAPNQNQREALLNELRGLWEQRSVRLHPMRADSAAEPLSSPINL.

Belongs to the NodU/CmcH family.

It localises to the cytoplasm. Functionally, involved in the O-carbamoylation of nod factors. The protein is Nodulation protein NolNO (nolO) of Sinorhizobium fredii (strain NBRC 101917 / NGR234).